We begin with the raw amino-acid sequence, 533 residues long: Peptide chain release factor 3 (533 aa).

The tr-type G domain maps to 9–284 (ARRRTFAIIS…ALCELSPPPL (276 aa)). Residues 18–25 (SHPDAGKT), 95–99 (DTPGH), and 149–152 (NKLD) contribute to the GTP site.

This sequence belongs to the TRAFAC class translation factor GTPase superfamily. Classic translation factor GTPase family. PrfC subfamily.

Its subcellular location is the cytoplasm. Increases the formation of ribosomal termination complexes and stimulates activities of RF-1 and RF-2. It binds guanine nucleotides and has strong preference for UGA stop codons. It may interact directly with the ribosome. The stimulation of RF-1 and RF-2 is significantly reduced by GTP and GDP, but not by GMP. The protein is Peptide chain release factor 3 of Cupriavidus taiwanensis (strain DSM 17343 / BCRC 17206 / CCUG 44338 / CIP 107171 / LMG 19424 / R1) (Ralstonia taiwanensis (strain LMG 19424)).